The chain runs to 267 residues: tRNA-cytidine(32) 2-sulfurtransferase 1 (267 aa).

The PP-loop motif signature appears at 42–47; that stretch reads SGGKDS. Residues Cys117, Cys120, and Cys208 each contribute to the [4Fe-4S] cluster site.

It belongs to the TtcA family. Homodimer. The cofactor is Mg(2+). Requires [4Fe-4S] cluster as cofactor.

The protein localises to the cytoplasm. The enzyme catalyses cytidine(32) in tRNA + S-sulfanyl-L-cysteinyl-[cysteine desulfurase] + AH2 + ATP = 2-thiocytidine(32) in tRNA + L-cysteinyl-[cysteine desulfurase] + A + AMP + diphosphate + H(+). It participates in tRNA modification. Functionally, catalyzes the ATP-dependent 2-thiolation of cytidine in position 32 of tRNA, to form 2-thiocytidine (s(2)C32). The sulfur atoms are provided by the cysteine/cysteine desulfurase (IscS) system. This Francisella tularensis subsp. novicida (strain U112) protein is tRNA-cytidine(32) 2-sulfurtransferase 1.